Reading from the N-terminus, the 39-residue chain is Contryphan-Cal1 (39 aa).

An N-terminal signal peptide occupies residues 1–20; it reads MTRTAVLLLTLLFLVAMAAS. Cys29 and Cys35 are joined by a disulfide.

As to expression, expressed by the venom duct.

Its subcellular location is the secreted. In terms of biological role, probable neurotoxin. In Californiconus californicus (California cone), this protein is Contryphan-Cal1.